We begin with the raw amino-acid sequence, 432 residues long: Eukaryotic translation initiation factor 3 subunit E (432 aa).

One can recognise a PCI domain in the interval 221 to 401 (VYYNYPKGRD…MGVKSVSIHE (181 aa)).

This sequence belongs to the eIF-3 subunit E family. In terms of assembly, component of the eukaryotic translation initiation factor 3 (eIF-3) complex.

It is found in the cytoplasm. Functionally, component of the eukaryotic translation initiation factor 3 (eIF-3) complex, which is involved in protein synthesis of a specialized repertoire of mRNAs and, together with other initiation factors, stimulates binding of mRNA and methionyl-tRNAi to the 40S ribosome. The eIF-3 complex specifically targets and initiates translation of a subset of mRNAs involved in cell proliferation. This is Eukaryotic translation initiation factor 3 subunit E from Caenorhabditis elegans.